We begin with the raw amino-acid sequence, 334 residues long: Serpentine receptor class alpha-11 (334 aa).

Topologically, residues Met-1 to Thr-23 are extracellular. The chain crosses the membrane as a helical span at residues Ser-24–Ile-44. The Cytoplasmic segment spans residues Gln-45 to Thr-57. The helical transmembrane segment at Arg-58–Ile-80 threads the bilayer. Topologically, residues Gln-81–Tyr-105 are extracellular. Residues Val-106–Ile-126 traverse the membrane as a helical segment. Residues Asp-127–Pro-145 are Cytoplasmic-facing. Residues Gly-146 to Trp-166 form a helical membrane-spanning segment. The Extracellular segment spans residues Gly-167–Phe-191. Residues Leu-192–Ile-212 form a helical membrane-spanning segment. The Cytoplasmic segment spans residues Asn-213–Ser-239. The helical transmembrane segment at Gln-240 to Thr-260 threads the bilayer. The Extracellular segment spans residues Lys-261–Leu-277. A helical membrane pass occupies residues Val-278 to Phe-298. At Thr-299 to Lys-334 the chain is on the cytoplasmic side.

This sequence belongs to the nematode receptor-like protein sra family. As to expression, expressed in interneurons AIY and AVB in L1 larvae. In adults, strong expression is seen in AIY and AIA but only weak expression in AVB.

The protein resides in the membrane. Its function is as follows. A G protein-coupled receptor required for olfactory imprinting a requisite in ordorant response such as benzaldehyde and isoamylalcohol. In Caenorhabditis elegans, this protein is Serpentine receptor class alpha-11 (sra-11).